The chain runs to 379 residues: MAKRDYYETLGCDRGADDTVLKASYRKLAMKWHPDRSQGNGEAEVMFKEVNEAYEVLKDPQKRAAYDRFGHAAFENGGGGGPGFGNDFASSFADIFDDLFGGAMNRGRGGGQQRGRGADLRYNMEITLEEAFSGKTAQIKIPTSVSCETCSGTGAKPGTQPKACRMCGGAGKIRHAQGFFTLERTCPNCQGRGSVIEDPCSDCGGAGRVTRERNLSVQIPAGVEDGTRIRLGGEGEAGVRGGAAGDLYIFLSIEPHTFFQREGADLYCRVPISMVTAALGGTVEVPTIDGDKSKVKIPEGTQSQKRFRLSGKGMPIMRARNHGDMYVQVVVETPQKLTKRQKELLAEFEKDSSGETHPESTGFFAKVKEFFQGAAGEGA.

Residues 5–70 (DYYETLGCDR…QKRAAYDRFG (66 aa)) form the J domain. A CR-type zinc finger spans residues 134–212 (GKTAQIKIPT…CGGAGRVTRE (79 aa)). Positions 147, 150, 164, 167, 186, 189, 200, and 203 each coordinate Zn(2+). 4 CXXCXGXG motif repeats span residues 147 to 154 (CETCSGTG), 164 to 171 (CRMCGGAG), 186 to 193 (CPNCQGRG), and 200 to 207 (CSDCGGAG).

This sequence belongs to the DnaJ family. As to quaternary structure, homodimer. Zn(2+) serves as cofactor.

It is found in the cytoplasm. Functionally, participates actively in the response to hyperosmotic and heat shock by preventing the aggregation of stress-denatured proteins and by disaggregating proteins, also in an autonomous, DnaK-independent fashion. Unfolded proteins bind initially to DnaJ; upon interaction with the DnaJ-bound protein, DnaK hydrolyzes its bound ATP, resulting in the formation of a stable complex. GrpE releases ADP from DnaK; ATP binding to DnaK triggers the release of the substrate protein, thus completing the reaction cycle. Several rounds of ATP-dependent interactions between DnaJ, DnaK and GrpE are required for fully efficient folding. Also involved, together with DnaK and GrpE, in the DNA replication of plasmids through activation of initiation proteins. The polypeptide is Chaperone protein DnaJ (Xanthobacter autotrophicus (strain ATCC BAA-1158 / Py2)).